The primary structure comprises 207 residues: Superoxide dismutase [Mn] (207 aa).

Residues histidine 28, histidine 76, aspartate 160, and histidine 164 each coordinate Mn(2+).

It belongs to the iron/manganese superoxide dismutase family. The cofactor is Mn(2+).

The catalysed reaction is 2 superoxide + 2 H(+) = H2O2 + O2. In terms of biological role, destroys superoxide anion radicals which are normally produced within the cells and which are toxic to biological systems. The sequence is that of Superoxide dismutase [Mn] (sodA) from Mycobacterium intracellulare (strain ATCC 13950 / DSM 43223 / JCM 6384 / NCTC 13025 / 3600).